The primary structure comprises 193 residues: Large ribosomal subunit protein uL5 (193 aa).

Belongs to the universal ribosomal protein uL5 family. As to quaternary structure, part of the 50S ribosomal subunit; part of the 5S rRNA/L5/L18/L25 subcomplex. Contacts the 5S rRNA and the P site tRNA. Forms a bridge to the 30S subunit in the 70S ribosome.

This is one of the proteins that bind and probably mediate the attachment of the 5S RNA into the large ribosomal subunit, where it forms part of the central protuberance. In the 70S ribosome it contacts protein S13 of the 30S subunit (bridge B1b), connecting the 2 subunits; this bridge is implicated in subunit movement. Contacts the P site tRNA; the 5S rRNA and some of its associated proteins might help stabilize positioning of ribosome-bound tRNAs. In Rhizorhabdus wittichii (strain DSM 6014 / CCUG 31198 / JCM 15750 / NBRC 105917 / EY 4224 / RW1) (Sphingomonas wittichii), this protein is Large ribosomal subunit protein uL5.